A 364-amino-acid chain; its full sequence is Methylthioribose-1-phosphate isomerase (364 aa).

D254 (proton donor) is an active-site residue.

This sequence belongs to the eIF-2B alpha/beta/delta subunits family. MtnA subfamily.

The protein resides in the cytoplasm. Its subcellular location is the nucleus. The enzyme catalyses 5-(methylsulfanyl)-alpha-D-ribose 1-phosphate = 5-(methylsulfanyl)-D-ribulose 1-phosphate. The protein operates within amino-acid biosynthesis; L-methionine biosynthesis via salvage pathway; L-methionine from S-methyl-5-thio-alpha-D-ribose 1-phosphate: step 1/6. Catalyzes the interconversion of methylthioribose-1-phosphate (MTR-1-P) into methylthioribulose-1-phosphate (MTRu-1-P). The sequence is that of Methylthioribose-1-phosphate isomerase from Drosophila yakuba (Fruit fly).